A 443-amino-acid chain; its full sequence is Phosphoglucosamine mutase (443 aa).

The active-site Phosphoserine intermediate is Ser102. 4 residues coordinate Mg(2+): Ser102, Asp241, Asp243, and Asp245. Ser102 carries the post-translational modification Phosphoserine.

Belongs to the phosphohexose mutase family. Requires Mg(2+) as cofactor. Post-translationally, activated by phosphorylation.

The enzyme catalyses alpha-D-glucosamine 1-phosphate = D-glucosamine 6-phosphate. Its function is as follows. Catalyzes the conversion of glucosamine-6-phosphate to glucosamine-1-phosphate. This chain is Phosphoglucosamine mutase, found in Albidiferax ferrireducens (strain ATCC BAA-621 / DSM 15236 / T118) (Rhodoferax ferrireducens).